The chain runs to 450 residues: UPF0210 protein MK1214 (450 aa).

Belongs to the UPF0210 family.

This Methanopyrus kandleri (strain AV19 / DSM 6324 / JCM 9639 / NBRC 100938) protein is UPF0210 protein MK1214.